The following is a 194-amino-acid chain: Interleukin-18 (194 aa).

Positions 1–36 are excised as a propeptide; the sequence is MAAMSEEGSCVNFKEMMFIDNTLYLIPEDNGDLESD.

Belongs to the IL-1 family. Forms a ternary complex with ligand-binding receptor subunit IL18R1 and signaling receptor subunit IL18RAP at the plasma membrane. Mature IL18 first binds to IL18R1 forming a low affinity binary complex, which then interacts with IL18RAP to form a high affinity ternary complex that signals inside the cell. Interacts with cargo receptor TMED10; the interaction mediates the translocation from the cytoplasm into the ERGIC (endoplasmic reticulum-Golgi intermediate compartment) and thereby secretion. In terms of processing, the pro-IL-18 precursor is processed by CASP1 to yield its mature, active form. The pro-IL-18 precursor is however not processed by Casp4/Casp11 in rodents. The pro-IL-18 precursor features autoinhibitory interactions between the propeptide and the post-cleavage-site region, preventing recognition by the IL18R1 receptor. Processing by CASP1 induces conformational changes to generate critical receptor-binding sites. The mature form is then secreted and released in the extracellular milieu by passing through the gasdermin-D (GSDMD) pore. In contrast, cleavage by CASP3 inactivates IL18.

Its subcellular location is the cytoplasm. It is found in the cytosol. The protein resides in the secreted. In terms of biological role, pro-inflammatory cytokine primarily involved in epithelial barrier repair, polarized T-helper 1 (Th1) cell and natural killer (NK) cell immune responses. Upon binding to IL18R1 and IL18RAP, forms a signaling ternary complex which activates NF-kappa-B, triggering synthesis of inflammatory mediators. Synergizes with IL12/interleukin-12 to induce IFNG synthesis from T-helper 1 (Th1) cells and natural killer (NK) cells. Involved in transduction of inflammation downstream of pyroptosis: its mature form is specifically released in the extracellular milieu by passing through the gasdermin-D (GSDMD) pore. The polypeptide is Interleukin-18 (Il18) (Rattus norvegicus (Rat)).